The chain runs to 936 residues: Periplasmic nitrate reductase (936 aa).

The segment at residues 1–31 (MALSRRDFLKSSAAAAAASAVGLSVPKEVEA) is a signal peptide (tat-type signal). The 4Fe-4S Mo/W bis-MGD-type domain maps to 40-96 (WRWDKAVCRFCGTGCGIMIATKDDRIVAVKGDPLAPVNRGLNCIKGYFTAKIMYGAD). [4Fe-4S] cluster contacts are provided by Cys-47, Cys-50, Cys-54, and Cys-82. Residues Lys-84, Gln-152, Asn-177, Cys-181, 214–221 (WGSNMAEM), 246–250 (STYTH), Met-424, Gln-428, Asn-534, 559–560 (SD), Lys-582, Asp-609, and 826–835 (TGRVLEHWHS) each bind Mo-bis(molybdopterin guanine dinucleotide). Trp-902 contacts substrate. Mo-bis(molybdopterin guanine dinucleotide) contacts are provided by Asn-910 and Lys-927.

Belongs to the prokaryotic molybdopterin-containing oxidoreductase family. NasA/NapA/NarB subfamily. As to quaternary structure, component of the periplasmic nitrate reductase NapAB complex composed of NapA and NapB. [4Fe-4S] cluster serves as cofactor. Mo-bis(molybdopterin guanine dinucleotide) is required as a cofactor. Post-translationally, predicted to be exported by the Tat system. The position of the signal peptide cleavage has not been experimentally proven.

The protein resides in the periplasm. The catalysed reaction is 2 Fe(II)-[cytochrome] + nitrate + 2 H(+) = 2 Fe(III)-[cytochrome] + nitrite + H2O. Its function is as follows. Catalytic subunit of the periplasmic nitrate reductase complex NapAB. Receives electrons from NapB and catalyzes the reduction of nitrate to nitrite. The sequence is that of Periplasmic nitrate reductase from Nitratiruptor sp. (strain SB155-2).